Consider the following 301-residue polypeptide: Mitochondrial carnitine/acylcarnitine carrier protein (301 aa).

An N-acetylalanine modification is found at A2. Residues 2–12 (ADQPKPISPLK) are Cytoplasmic-facing. 3 Solcar repeats span residues 8–99 (ISPL…GKKL), 108–196 (LSYP…VKNI), and 207–293 (LSVP…AMKF). Residues 13-31 (NLLAGGFGGVCLVFVGHPL) traverse the membrane as a helical segment. The Mitochondrial matrix portion of the chain corresponds to 32 to 73 (DTVKVRLQTQPPSLPGQPPMYSGTFDCFRKTLFREGIRGLYR). Residues 74–93 (GMAAPIIGVTPMFAVCFFGF) form a helical membrane-spanning segment. Over 94–112 (GLGKKLQQKHPEDVLSYPQ) the chain is Cytoplasmic. Residues 113–131 (LFAAGMLSGIFTTGIMTPG) form a helical membrane-spanning segment. At 132–170 (ERIKCLLQIQASSGETKYTGTLDCAKKLYQEFGIRGIYK) the chain is on the mitochondrial matrix side. N6-acetyllysine is present on residues K148 and K157. The residue at position 170 (K170) is an N6-acetyllysine; alternate. K170 bears the N6-succinyllysine; alternate mark. The helical transmembrane segment at 171 to 190 (GTVVTLMRDVPASGMYFMTY) threads the bilayer. The Cytoplasmic portion of the chain corresponds to 191–211 (EWVKNIFTPEGKRVSELSVPR). Residues 212 to 230 (VLVAGGIAGIFNWAVAIPP) traverse the membrane as a helical segment. Topologically, residues 231–267 (DVLKSRFQTAPPGKYPNGFRDVLRELIPDEGVTSLYK) are mitochondrial matrix. A helical membrane pass occupies residues 268-287 (GFNAVMIRAFPANAACFLGF). At 288–301 (EVAMKFLNWATPNL) the chain is on the cytoplasmic side.

Belongs to the mitochondrial carrier (TC 2.A.29) family.

The protein resides in the mitochondrion inner membrane. It catalyses the reaction O-acetyl-(R)-carnitine(in) + (R)-carnitine(out) = O-acetyl-(R)-carnitine(out) + (R)-carnitine(in). The enzyme catalyses an O-acyl-(R)-carnitine(in) + (R)-carnitine(out) = an O-acyl-(R)-carnitine(out) + (R)-carnitine(in). It carries out the reaction O-propanoyl-(R)-carnitine(in) + (R)-carnitine(out) = O-propanoyl-(R)-carnitine(out) + (R)-carnitine(in). The catalysed reaction is O-hexadecanoyl-(R)-carnitine(in) + (R)-carnitine(out) = O-hexadecanoyl-(R)-carnitine(out) + (R)-carnitine(in). It catalyses the reaction O-octanoyl-(R)-carnitine(in) + (R)-carnitine(out) = O-octanoyl-(R)-carnitine(out) + (R)-carnitine(in). The enzyme catalyses (R)-carnitine(in) = (R)-carnitine(out). Its function is as follows. Mediates the electroneutral exchange of acylcarnitines (O-acyl-(R)-carnitine or L-acylcarnitine) of different acyl chain lengths (ranging from O-acetyl-(R)-carnitine to long-chain O-acyl-(R)-carnitines) with free carnitine ((R)-carnitine or L-carnitine) across the mitochondrial inner membrane, via a ping-pong mechanism. Key player in the mitochondrial oxidation pathway, it translocates the fatty acids in the form of acylcarnitines into the mitochondrial matrix, where the carnitine palmitoyltransferase 2 (CPT-2) activates them to undergo fatty acid beta-oxidation. Catalyzes the unidirectional transport (uniport) of carnitine at lower rates than the antiport (exchange). This Macaca fascicularis (Crab-eating macaque) protein is Mitochondrial carnitine/acylcarnitine carrier protein (SLC25A20).